The primary structure comprises 284 residues: Signal peptidase I (284 aa).

Residues 4 to 22 (NFPLLLVIAVAVCGLLALL) form a helical membrane-spanning segment. Topologically, residues 23-58 (DLVFFAPRRRSAIASYQGSVSQPDAVVIEKLNKEPL) are cytoplasmic. Residues 59 to 77 (LVEYGKSFFPVLFIVLVLR) traverse the membrane as a helical segment. Residues 78–284 (SFLVEPFQIP…PNFSRVGLIK (207 aa)) are Periplasmic-facing. Catalysis depends on residues serine 90 and lysine 145.

Belongs to the peptidase S26 family.

It is found in the cell inner membrane. It carries out the reaction Cleavage of hydrophobic, N-terminal signal or leader sequences from secreted and periplasmic proteins.. The protein is Signal peptidase I (lepB) of Pseudomonas fluorescens.